A 433-amino-acid chain; its full sequence is Zinc finger and SCAN domain-containing protein 4 (433 aa).

The region spanning 44–126 is the SCAN box domain; the sequence is RMVLNSFQDS…RFIEDLTDDS (83 aa). Composition is skewed to polar residues over residues 165 to 185, 195 to 210, and 277 to 299; these read TTRE…SLET, GWNS…ENIT, and QPEQ…STCE. 2 disordered regions span residues 165–210 and 275–301; these read TTRE…ENIT and ISQP…CEVH. 4 consecutive C2H2-type zinc fingers follow at residues 312 to 334, 340 to 362, 368 to 390, and 396 to 418; these read YKCE…QRRH, FVCP…QIIH, FTCS…ERIH, and YTCP…MRTH.

It localises to the nucleus. It is found in the chromosome. The protein localises to the telomere. Functionally, embryonic stem (ES) cell-specific transcription factor required to regulate ES cell pluripotency. Binds telomeres and plays a key role in genomic stability in ES cells by regulating telomere elongation. Acts as an activator of spontaneous telomere sister chromatid exchange (T-SCE) and telomere elongation in undifferentiated ES cells. In Homo sapiens (Human), this protein is Zinc finger and SCAN domain-containing protein 4 (ZSCAN4).